The primary structure comprises 461 residues: MGRTREAGCVAAGMVIGAGACYCVYRLTWGKDENEKLWDDEDEEEEEEEESCSGKPEIGGKTVKERKTHVGVGAGAKPQDDSKSKAEANVGPENGPDVKKEVYPESHSEGGLEAKAKALFKSLKEQASAKAGRGIRFPNISRIRTLTSSLPCPGGRGGGCHPGRTGSRARNRTSGKVKRKNRSKSNKAPATAWPVRRGKFSFPYKIDDILSAPDLQKVLNILERTNDPFTQEVALVTLGNNAAYSFNQNAIRELGGVPIIAKLIKTRDPIIREKTYNALNNLSVNSENQGKIKTYISQVCDDTMVCRLDSAVQMAGLRLLTNMTVTNHYQHLLSYSFPDFFALLFLGNHFTKIQTMKLIINFTENPAMTRELVSCKVPSELISLFNKEWDREILLNILTLFENINDNIKSEGLASSRKEFSRSSLFFLFKESGVCVKKIKALASHKDLVVKVKVLKVLTKL.

Residues 1–6 (MGRTRE) lie on the Mitochondrial intermembrane side of the membrane. Mitochondrion outer membrane (MOM)-targeting sequence regions lie at residues 1 to 6 (MGRTRE) and 26 to 36 (RLTWGKDENEK). The chain crosses the membrane as a helical; Signal-anchor span at residues 7 to 29 (AGCVAAGMVIGAGACYCVYRLTW). Topologically, residues 30–461 (GKDENEKLWD…VKVLKVLTKL (432 aa)) are cytoplasmic. Disordered stretches follow at residues 34-110 (NEKL…HSEG) and 148-192 (SSLP…PATA). Positions 38–51 (WDDEDEEEEEEEES) are enriched in acidic residues. Over residues 96 to 110 (PDVKKEVYPESHSEG) the composition is skewed to basic and acidic residues. Residues 167–185 (SRARNRTSGKVKRKNRSKS) are compositionally biased toward basic residues. 4 ARM repeats span residues 203–243 (PYKI…NNAA), 245–284 (SFNQNAIRELGGVPIIAKLIKTRDPIIREKTYNALNNLSV), 366–406 (PAMT…NIND), and 423–461 (SSLFFLFKESGVCVKKIKALASHKDLVVKVKVLKVLTKL).

It belongs to the eutherian X-chromosome-specific Armcx family. In terms of assembly, interacts with MIRO1.

It localises to the mitochondrion. It is found in the mitochondrion outer membrane. In terms of biological role, regulates mitochondrial transport during axon regeneration. Increases the proportion of motile mitochondria by recruiting stationary mitochondria into the motile pool. Enhances mitochondria movement and neurite growth in both adult axons and embryonic neurons. Promotes neuronal survival and axon regeneration after nerve injury. May link mitochondria to the Trak1-kinesin motor complex via its interaction with MIRO1. The protein is Armadillo repeat-containing X-linked protein 1 (Armcx1) of Rattus norvegicus (Rat).